A 281-amino-acid polypeptide reads, in one-letter code: MLLSGSSSQSLAAALAAATGERLGDVTYDSFPDGEQLVTVPPAVDGERAVIVASTPTSDAHIEVLQLQDAARDAGASEIITVLPYMGYARQDDAFDPGQPVSARAVARAISTGTDRVLTVNPHEDGVLECFDVPAAGVDAAPQLAAPLPADLTDPVFLSPDHGATDLATSVRDAYGTGVTDHFQKVRHSGSDVTVEPSEIQTAGRDVVVTDDIVATGTTMSEAITALDDPARVFVATVHPLLAGSARLKLARAGVEAVYGTDTIECAVSEVSAAPAIADAL.

Residues 33–35 and 90–91 each bind ATP; these read DGE and RQ. His123 and Asp161 together coordinate Mg(2+). Lys185 is an active-site residue. Residues Arg187 and Asp211 each contribute to the D-ribose 5-phosphate site.

It belongs to the ribose-phosphate pyrophosphokinase family. Class III (archaeal) subfamily. Requires Mg(2+) as cofactor.

It localises to the cytoplasm. It catalyses the reaction D-ribose 5-phosphate + ATP = 5-phospho-alpha-D-ribose 1-diphosphate + AMP + H(+). It functions in the pathway metabolic intermediate biosynthesis; 5-phospho-alpha-D-ribose 1-diphosphate biosynthesis; 5-phospho-alpha-D-ribose 1-diphosphate from D-ribose 5-phosphate (route I): step 1/1. Involved in the biosynthesis of the central metabolite phospho-alpha-D-ribosyl-1-pyrophosphate (PRPP) via the transfer of pyrophosphoryl group from ATP to 1-hydroxyl of ribose-5-phosphate (Rib-5-P). The protein is Ribose-phosphate pyrophosphokinase of Halobacterium salinarum (strain ATCC 29341 / DSM 671 / R1).